We begin with the raw amino-acid sequence, 1647 residues long: Ras GTPase-activating-like protein IQG1 (1647 aa).

A disordered region spans residues 18-51; it reads DTTATTTTTTTSNVLQPSNRLNSPTKFNRKSLDN. Residues 19–28 show a composition bias toward low complexity; sequence TTATTTTTTT. Residues 29 to 43 are compositionally biased toward polar residues; that stretch reads SNVLQPSNRLNSPTK. A Phosphoserine modification is found at S48. 3 positions are modified to phosphothreonine: T66, T72, and T82. Phosphoserine occurs at positions 83, 91, and 139. Residues 143 to 162 are compositionally biased toward polar residues; sequence FNTQSNVHTPLKQLNQPIGT. The disordered stretch occupies residues 143–175; the sequence is FNTQSNVHTPLKQLNQPIGTPSSSSLSPAKNAS. Over residues 163 to 175 the composition is skewed to low complexity; it reads PSSSSLSPAKNAS. Phosphoserine occurs at positions 165, 167, and 169. The Calponin-homology (CH) domain maps to 184–291; it reads LCRIEAIKQW…FCLHALSYIL (108 aa). The segment at 326–427 is disordered; the sequence is PLPNFSSADT…STSNAKLELH (102 aa). The span at 342–355 shows a compositional bias: low complexity; that stretch reads TSNNNSSTTSATAA. The residue at position 367 (T367) is a Phosphothreonine. A compositionally biased stretch (low complexity) spans 368–379; it reads PSPLKRPQQLQK. The residue at position 369 (S369) is a Phosphoserine. Basic and acidic residues-rich tracts occupy residues 380–392 and 402–413; these read KQLELVEDNKPEL and ISRDDPFTDRVD. A phosphoserine mark is found at S433 and S440. 9 IQ domains span residues 467 to 478, 528 to 539, 556 to 567, 586 to 597, 616 to 627, 642 to 653, 672 to 683, 734 to 745, and 764 to 775; these read FQSLARGAVFRY, LQSIIRKNFVIN, LQSLIRGKLTRD, FQSLVRMKSIYS, LQSIARSQLYHR, IQSIIRRNAVIE, LQSIARGGVART, VQTLFRGVLSRY, and LQSVARGKLMRG. Residues 841–919 adopt a coiled-coil conformation; that stretch reads LSDLKDLIIE…KKIELWQTLF (79 aa). One can recognise a Ras-GAP domain in the interval 958-1223; the sequence is PVRDSSITYH…DTVKSIISQA (266 aa). S1064, S1068, S1088, S1383, and S1385 each carry phosphoserine.

Interacts with myosin MYO1 and its light chain MLC1. Interacts with BNI1. Interacts with BNR1. Interacts with CLB2. Interacts with CLB4. Interacts with CDC28. Hyperphosphorylated. Phosphorylation is cell cycle-dependent and peaks at the time of cytokinesis. Contains 21 consensus sites for cyclin-dependent kinases (CDKs). At least some of them are phosphorylated by the CLB2-CDC28 kinase complex. Mutation of 15 of the phosphorylation sites to Ala caused both premature assembly and delayed disassembly of the actomyosin ring, blocked interaction with the actin-nucleating proteins BNI1 and BNR1, and resulted in defects in cytokinesis.

Its subcellular location is the bud neck. In terms of biological role, required for the assembly and the contraction of the actomyosin ring at the bud neck during cytokinesis. In Candida albicans (strain SC5314 / ATCC MYA-2876) (Yeast), this protein is Ras GTPase-activating-like protein IQG1 (IQG1).